A 102-amino-acid chain; its full sequence is uncharacterized protein (102 aa).

The next 2 membrane-spanning stretches (helical) occupy residues 38–58 and 64–84; these read FYVW…QLIL and VLFL…LFQF.

It is found in the membrane. This is an uncharacterized protein from Saccharomyces cerevisiae (strain ATCC 204508 / S288c) (Baker's yeast).